A 363-amino-acid polypeptide reads, in one-letter code: Anhydro-N-acetylmuramic acid kinase (363 aa).

9–16 (GTSLDGID) provides a ligand contact to ATP.

It belongs to the anhydro-N-acetylmuramic acid kinase family.

The catalysed reaction is 1,6-anhydro-N-acetyl-beta-muramate + ATP + H2O = N-acetyl-D-muramate 6-phosphate + ADP + H(+). It participates in amino-sugar metabolism; 1,6-anhydro-N-acetylmuramate degradation. The protein operates within cell wall biogenesis; peptidoglycan recycling. Functionally, catalyzes the specific phosphorylation of 1,6-anhydro-N-acetylmuramic acid (anhMurNAc) with the simultaneous cleavage of the 1,6-anhydro ring, generating MurNAc-6-P. Is required for the utilization of anhMurNAc either imported from the medium or derived from its own cell wall murein, and thus plays a role in cell wall recycling. The sequence is that of Anhydro-N-acetylmuramic acid kinase from Nitrosomonas europaea (strain ATCC 19718 / CIP 103999 / KCTC 2705 / NBRC 14298).